The chain runs to 497 residues: Putative diacyglycerol O-acyltransferase Rv3480c (497 aa).

Residue His-143 is the Proton acceptor of the active site.

It belongs to the long-chain O-acyltransferase family.

The enzyme catalyses an acyl-CoA + a 1,2-diacyl-sn-glycerol = a triacyl-sn-glycerol + CoA. It carries out the reaction di-(9Z)-octadecenoylglycerol + (9Z)-octadecenoyl-CoA = 1,2,3-tri-(9Z-octadecenoyl)-glycerol + CoA. The catalysed reaction is hexadecan-1-ol + hexadecanoyl-CoA = hexadecanyl hexadecanoate + CoA. The protein operates within glycerolipid metabolism; triacylglycerol biosynthesis. Upon expression in E.coli has a weak triacylglycerol synthase function, making triacylglycerol (TG) from diolein and long-chain fatty acyl-CoA. Also functions weakly as a wax synthase, as it incorporates palmityl alcohol into wax esters in the presence of palmitoyl-CoA. The chain is Putative diacyglycerol O-acyltransferase Rv3480c from Mycobacterium tuberculosis (strain ATCC 25618 / H37Rv).